The primary structure comprises 444 residues: Trigger factor (444 aa).

In terms of domain architecture, PPIase FKBP-type spans 166 to 251 (GDQVVIDFEG…VHAVKAPKPA (86 aa)).

Belongs to the FKBP-type PPIase family. Tig subfamily.

The protein resides in the cytoplasm. The catalysed reaction is [protein]-peptidylproline (omega=180) = [protein]-peptidylproline (omega=0). Involved in protein export. Acts as a chaperone by maintaining the newly synthesized protein in an open conformation. Functions as a peptidyl-prolyl cis-trans isomerase. This Rhodobacter capsulatus (strain ATCC BAA-309 / NBRC 16581 / SB1003) protein is Trigger factor (tig).